The primary structure comprises 567 residues: Nucleolus and neural progenitor protein (567 aa).

At Ser265 the chain carries Phosphoserine. Residues 437-457 (SKHHLRQRRSQNKFLRRQRKP) are disordered. The segment at 442–460 (RQRRSQNKFLRRQRKPQRK) is nuclear localization signal.

Belongs to the nepro family.

The protein resides in the nucleus. Its subcellular location is the nucleolus. In terms of biological role, may play a role in cortex development as part of the Notch signaling pathway. Downstream of Notch may repress the expression of proneural genes and inhibit neuronal differentiation thereby maintaining neural progenitors. May also play a role in preimplentation embryo development. The protein is Nucleolus and neural progenitor protein of Homo sapiens (Human).